An 876-amino-acid polypeptide reads, in one-letter code: Alanine--tRNA ligase (876 aa).

An N6-acetyllysine modification is found at Lys74. Zn(2+) is bound by residues His564, His568, Cys666, and His670.

Belongs to the class-II aminoacyl-tRNA synthetase family. Homotetramer. The cofactor is Zn(2+).

Its subcellular location is the cytoplasm. The enzyme catalyses tRNA(Ala) + L-alanine + ATP = L-alanyl-tRNA(Ala) + AMP + diphosphate. In terms of biological role, catalyzes the attachment of alanine to tRNA(Ala) in a two-step reaction: alanine is first activated by ATP to form Ala-AMP and then transferred to the acceptor end of tRNA(Ala). Also edits incorrectly charged Ser-tRNA(Ala) and Gly-tRNA(Ala) via its editing domain. The polypeptide is Alanine--tRNA ligase (Escherichia coli O6:K15:H31 (strain 536 / UPEC)).